Reading from the N-terminus, the 37-residue chain is Large ribosomal subunit protein bL36A (37 aa).

This sequence belongs to the bacterial ribosomal protein bL36 family.

The sequence is that of Large ribosomal subunit protein bL36A from Kocuria rhizophila (strain ATCC 9341 / DSM 348 / NBRC 103217 / DC2201).